Consider the following 75-residue polypeptide: Brevinin-2ISc (75 aa).

The signal sequence occupies residues 1-22 (MFTLKKSLLLLFFLGTISLSLC). Residues 23 to 40 (EEERDADEDEGEMTEEEV) constitute a propeptide, removed in mature form. A disulfide bond links C69 and C75.

In terms of tissue distribution, expressed by the skin glands.

The protein resides in the secreted. Has antimicrobial activity against Gram-negative bacterium E.coli ATCC 8739 (MIC=50 ug) and against Gram positive bacteria S.aureus ATCC 6538 (MIC=25 ug). Has no activity against methicillin-resistant S.aureus ATCC 43300, B.subtilis ATCC 6633 and against fungus C.albicans ATCC 90028. The chain is Brevinin-2ISc from Odorrana ishikawae (Ishikawa's frog).